Reading from the N-terminus, the 138-residue chain is MAEMTVQIVTPDGLKYDHHAKFILVKTPNGELGVLANHENLIAPLEVHEMKIKRIDDDSHVDWVAVNGGIIEIKDNLVTIVADSAERERDIDLSRAERAKKRAEKAIEEAKEQHRIDEVQRAQVALRRALNRINVGSK.

It belongs to the ATPase epsilon chain family. F-type ATPases have 2 components, CF(1) - the catalytic core - and CF(0) - the membrane proton channel. CF(1) has five subunits: alpha(3), beta(3), gamma(1), delta(1), epsilon(1). CF(0) has three main subunits: a, b and c.

The protein localises to the cell membrane. Functionally, produces ATP from ADP in the presence of a proton gradient across the membrane. This chain is ATP synthase epsilon chain (atpC), found in Streptococcus mutans serotype c (strain ATCC 700610 / UA159).